The following is a 398-amino-acid chain: Phosphoglycerate kinase (398 aa).

Substrate contacts are provided by residues 23–25 (DFN), R38, 61–64 (HMGK), R122, and R155. ATP contacts are provided by residues K206, G297, E328, and 354-357 (GGDS).

Belongs to the phosphoglycerate kinase family. Monomer.

It localises to the cytoplasm. The enzyme catalyses (2R)-3-phosphoglycerate + ATP = (2R)-3-phospho-glyceroyl phosphate + ADP. It functions in the pathway carbohydrate degradation; glycolysis; pyruvate from D-glyceraldehyde 3-phosphate: step 2/5. In Clostridium botulinum (strain Langeland / NCTC 10281 / Type F), this protein is Phosphoglycerate kinase.